The following is a 415-amino-acid chain: Succinate--CoA ligase [GDP-forming] subunit beta, mitochondrial (415 aa).

Residues 1–19 (MLRAAGNLSKSMMKSQRRF) constitute a mitochondrion transit peptide. The 231-residue stretch at 28-258 (KEILEKHGCS…SAAYRQKEIF (231 aa)) folds into the ATP-grasp domain. GTP-binding positions include Gln39, 72–74 (GRG), and Val130. The Mg(2+) site is built by Asn227 and Asp241. Substrate contacts are provided by residues Asn292 and 349-351 (GIV).

Belongs to the succinate/malate CoA ligase beta subunit family. GTP-specific subunit beta subfamily. Heterodimer of an alpha and a beta subunit. The beta subunit determines specificity for GTP. Mg(2+) serves as cofactor.

The protein localises to the mitochondrion. It carries out the reaction GTP + succinate + CoA = succinyl-CoA + GDP + phosphate. The protein operates within carbohydrate metabolism; tricarboxylic acid cycle; succinate from succinyl-CoA (ligase route): step 1/1. Functionally, GTP-specific succinyl-CoA synthetase functions in the citric acid cycle (TCA), coupling the hydrolysis of succinyl-CoA to the synthesis of GTP and thus represents the only step of substrate-level phosphorylation in the TCA. The beta subunit provides nucleotide specificity of the enzyme and binds the substrate succinate, while the binding sites for coenzyme A and phosphate are found in the alpha subunit. This chain is Succinate--CoA ligase [GDP-forming] subunit beta, mitochondrial, found in Caenorhabditis elegans.